A 339-amino-acid chain; its full sequence is Anthranilate phosphoribosyltransferase (339 aa).

5-phospho-alpha-D-ribose 1-diphosphate is bound by residues G86, 89 to 90 (GD), T94, 96 to 99 (NIST), 114 to 122 (KHGNRGVSS), and S126. G86 contacts anthranilate. Residue S98 coordinates Mg(2+). N117 serves as a coordination point for anthranilate. R172 is an anthranilate binding site. Mg(2+)-binding residues include D230 and E231.

It belongs to the anthranilate phosphoribosyltransferase family. As to quaternary structure, homodimer. Requires Mg(2+) as cofactor.

The catalysed reaction is N-(5-phospho-beta-D-ribosyl)anthranilate + diphosphate = 5-phospho-alpha-D-ribose 1-diphosphate + anthranilate. The protein operates within amino-acid biosynthesis; L-tryptophan biosynthesis; L-tryptophan from chorismate: step 2/5. Functionally, catalyzes the transfer of the phosphoribosyl group of 5-phosphorylribose-1-pyrophosphate (PRPP) to anthranilate to yield N-(5'-phosphoribosyl)-anthranilate (PRA). This chain is Anthranilate phosphoribosyltransferase, found in Photobacterium profundum (strain SS9).